A 163-amino-acid polypeptide reads, in one-letter code: uncharacterized protein (163 aa).

The disordered stretch occupies residues P128–V163. Over residues K129–V163 the composition is skewed to basic residues.

This is an uncharacterized protein from Sulfurisphaera tokodaii (strain DSM 16993 / JCM 10545 / NBRC 100140 / 7) (Sulfolobus tokodaii).